The primary structure comprises 1038 residues: Isoleucine--tRNA ligase (1038 aa).

A 'HIGH' region motif is present at residues 47–57 (PFATGLPHYGH). The 'KMSKS' region motif lies at 591-595 (KMSKR). Lys-594 contacts ATP.

Belongs to the class-I aminoacyl-tRNA synthetase family. IleS type 2 subfamily. Monomer. Zn(2+) is required as a cofactor.

Its subcellular location is the cytoplasm. The catalysed reaction is tRNA(Ile) + L-isoleucine + ATP = L-isoleucyl-tRNA(Ile) + AMP + diphosphate. Catalyzes the attachment of isoleucine to tRNA(Ile). As IleRS can inadvertently accommodate and process structurally similar amino acids such as valine, to avoid such errors it has two additional distinct tRNA(Ile)-dependent editing activities. One activity is designated as 'pretransfer' editing and involves the hydrolysis of activated Val-AMP. The other activity is designated 'posttransfer' editing and involves deacylation of mischarged Val-tRNA(Ile). This chain is Isoleucine--tRNA ligase, found in Protochlamydia amoebophila (strain UWE25).